We begin with the raw amino-acid sequence, 509 residues long: Maturase K (509 aa).

Belongs to the intron maturase 2 family. MatK subfamily.

The protein resides in the plastid. It is found in the chloroplast. Usually encoded in the trnK tRNA gene intron. Probably assists in splicing its own and other chloroplast group II introns. This Nymphaea odorata (White water lily) protein is Maturase K.